A 363-amino-acid chain; its full sequence is S-adenosylmethionine:tRNA ribosyltransferase-isomerase (363 aa).

It belongs to the QueA family. Monomer.

The protein localises to the cytoplasm. The catalysed reaction is 7-aminomethyl-7-carbaguanosine(34) in tRNA + S-adenosyl-L-methionine = epoxyqueuosine(34) in tRNA + adenine + L-methionine + 2 H(+). It functions in the pathway tRNA modification; tRNA-queuosine biosynthesis. Its function is as follows. Transfers and isomerizes the ribose moiety from AdoMet to the 7-aminomethyl group of 7-deazaguanine (preQ1-tRNA) to give epoxyqueuosine (oQ-tRNA). In Haemophilus influenzae (strain 86-028NP), this protein is S-adenosylmethionine:tRNA ribosyltransferase-isomerase.